A 197-amino-acid chain; its full sequence is GCN5-related N-acetyltransferase 1, chloroplastic (197 aa).

Residues 1 to 37 (MFLGGTISTPPASLRLRSTLNPQNAVTQSSSQATFPA) constitute a chloroplast transit peptide. The span at 23–34 (QNAVTQSSSQAT) shows a compositional bias: polar residues. A disordered region spans residues 23–46 (QNAVTQSSSQATFPAAMQRKPPSY). The N-acetyltransferase domain occupies 58–195 (FLLRRTTEGL…GMVFIRKQRN (138 aa)). Residues 129-131 (VVV), 137-142 (SCGLGK), 165-167 (EPR), and Tyr172 each bind acetyl-CoA. The active-site Proton donor is the Tyr172.

Belongs to the acetyltransferase family. GNAT subfamily. Oligomer. Post-translationally, autoacetylated. As to expression, expressed in green tissues. Accumulates mainly in flowers and young leaves, and, to a lower extent, in stems and mature leaves, but barely in roots.

It is found in the plastid. Its subcellular location is the chloroplast. The catalysed reaction is an N-terminal L-alpha-aminoacyl-[protein] + acetyl-CoA = N-terminal N(alpha)-acetyl-L-alpha-aminoacyl-[protein] + CoA + H(+). It catalyses the reaction L-lysyl-[protein] + acetyl-CoA = N(6)-acetyl-L-lysyl-[protein] + CoA + H(+). It carries out the reaction 5-methoxytryptamine + acetyl-CoA = melatonin + CoA + H(+). The enzyme catalyses serotonin + acetyl-CoA = N-acetylserotonin + CoA + H(+). Inhibited by 5-methoxytryptamine in vitro. Its function is as follows. Protein acetyltransferase with dual specificity triggering both N-alpha-acetylation (NTA) and epsilon-lysine acetylation (KA), possibly with a low efficiency or toward specific plastid substrates. Involved in melatonin biosynthesis by catalyzing the formation of N-acetylserotonin (NAS) from serotonin and of melatonin (N-acetyl-5-methoxytryptamine) from 5-methoxytryptamine (5-MT). In Arabidopsis thaliana (Mouse-ear cress), this protein is GCN5-related N-acetyltransferase 1, chloroplastic.